Consider the following 443-residue polypeptide: Glutamine synthetase (443 aa).

The region spanning 16–97 (KRIKFVQLIF…VYGYIYKDGK (82 aa)) is the GS beta-grasp domain. The 341-residue stretch at 103–443 (PRGVLRRTLE…EWELERYFFI (341 aa)) folds into the GS catalytic domain. Mg(2+) contacts are provided by E126 and E128. ATP is bound at residue E176. Mg(2+) contacts are provided by E181 and E188. G233 contacts L-glutamate. H237 contacts Mg(2+). Residues 239–241 (HIS) and S241 contribute to the ATP site. Residues R287, E293, and R305 each contribute to the L-glutamate site. ATP is bound by residues R305 and R310. E322 is a binding site for Mg(2+). R324 contributes to the L-glutamate binding site.

Belongs to the glutamine synthetase family. In terms of assembly, oligomer of 12 subunits arranged in the form of two hexagons. Mg(2+) serves as cofactor.

It is found in the cytoplasm. The catalysed reaction is L-glutamate + NH4(+) + ATP = L-glutamine + ADP + phosphate + H(+). Probably involved in nitrogen metabolism via ammonium assimilation. Catalyzes the ATP-dependent biosynthesis of glutamine from glutamate and ammonia. The sequence is that of Glutamine synthetase from Pyrococcus horikoshii (strain ATCC 700860 / DSM 12428 / JCM 9974 / NBRC 100139 / OT-3).